The primary structure comprises 101 residues: Anti-sigma factor RshA (101 aa).

The segment at Asp9 to Asp15 is inhibits SigH sigma factor activity. Cys23 provides a ligand contact to iron-sulfur cluster. 2 inhibits SigH sigma factor activity regions span residues Ala28–Leu34 and Cys38–Glu44. Residues His49, Cys53, and Cys56 each contribute to the iron-sulfur cluster site. Thr94 is modified (phosphothreonine).

This sequence belongs to the zinc-associated anti-sigma factor (ZAS) superfamily. In terms of assembly, interacts with cognate sigma factor SigH under reducing conditions. Binding inhibits the interaction of SigH with the RNA polymerase catalytic core. Requires iron-sulfur cluster as cofactor. Phosphorylated, probably by PknB. Phosphorylation decreases interaction with SigH, leading to increased SigH-mediated transcription.

Functionally, an redox-regulated anti-sigma factor for extracytoplasmic function (ECF) sigma factor SigH. ECF sigma factors are held in an inactive form by a cognate anti-sigma factor. RshA and some peptides derived from it inhibit the sigma factor activity of SigH. Probably releases SigH during oxidative stress. The polypeptide is Anti-sigma factor RshA (rshA) (Mycobacterium tuberculosis (strain CDC 1551 / Oshkosh)).